The chain runs to 342 residues: (Lyso)-N-acylphosphatidylethanolamine lipase (342 aa).

The AB hydrolase-1 domain occupies 70-324; it reads PLVMVHGFGG…IEGASHHVYA (255 aa).

Belongs to the peptidase S33 family. ABHD4/ABHD5 subfamily.

It carries out the reaction N-hexadecanoyl-1,2-di-(9Z-octadecenoyl)-sn-glycero-3-phosphoethanolamine + H2O = N-hexadecanoyl-1-(9Z-octadecenoyl)-sn-glycero-3-phosphoethanolamine + (9Z)-octadecenoate + H(+). It catalyses the reaction an N-acyl-1,2-diacyl-sn-glycero-3-phosphoethanolamine + H2O = N,1-diacyl-sn-glycero-3-phosphoethanolamine + a fatty acid + H(+). The enzyme catalyses N-hexadecanoyl-1-(9Z-octadecenoyl)-sn-glycero-3-phosphoethanolamine + H2O = N-hexadecanoyl-sn-glycero-3-phosphoethanolamine + (9Z)-octadecenoate + H(+). The catalysed reaction is N-octadecanoyl-1-(9Z-octadecenoyl)-sn-glycero-3-phosphoethanolamine + H2O = N-octadecanoyl-sn-glycero-3-phospho-ethanolamine + (9Z)-octadecenoate + H(+). It carries out the reaction N-eicosanoyl-1-(9Z-octadecenoyl)-sn-glycero-3-phosphoethanolamine + H2O = N-eicosanoyl-sn-glycero-3-phosphoethanolamine + (9Z)-octadecenoate + H(+). It catalyses the reaction N,1-di-(9Z-octadecenoyl)-sn-glycero-3-phosphoethanolamine + H2O = N-(9Z-octadecenoyl)-sn-glycero-3-phosphoethanolamine + (9Z)-octadecenoate + H(+). The enzyme catalyses N-(5Z,8Z,11Z,14Z-eicosatetraenoyl)-1-(9Z-octadecenoyl)-sn-glycero-3-phosphoethanolamine + H2O = N-(5Z,8Z,11Z,14Z-eicosatetraenoyl)-sn-glycero-3-phosphoethanolamine + (9Z)-octadecenoate + H(+). The catalysed reaction is 1-octadecanoyl-2-(9Z-octadecenoyl)-sn-glycero-3-phospho-(N-hexadecanoyl)-serine + H2O = 1-octadecanoyl-2-hydroxy-sn-glycero-3-phospho-(N-hexadecanoyl)-serine + (9Z)-octadecenoate + H(+). It carries out the reaction 1-O-(1Z-octadecenoyl)-2-(9Z-octadecenoyl)-sn-glycero-3-phospho-N-hexadecanoyl-ethanolamine + H2O = 1-O-(1Z-octadecenyl)-sn-glycero-3-phospho-N-hexadecanoyl-ethanolamine + (9Z)-octadecenoate + H(+). It catalyses the reaction N,1-diacyl-sn-glycero-3-phosphoethanolamine + H2O = N-acyl-sn-glycero-3-phosphoethanolamine + a fatty acid + H(+). Functionally, lysophospholipase selective for N-acyl phosphatidylethanolamine (NAPE). Contributes to the biosynthesis of N-acyl ethanolamines, including the endocannabinoid anandamide by hydrolyzing the sn-1 and sn-2 acyl chains from N-acyl phosphatidylethanolamine (NAPE) generating glycerophospho-N-acyl ethanolamine (GP-NAE), an intermediate for N-acyl ethanolamine biosynthesis. Hydrolyzes substrates bearing saturated, monounsaturated, polyunsaturated N-acyl chains. Shows no significant activity towards other lysophospholipids, including lysophosphatidylcholine, lysophosphatidylethanolamine and lysophosphatidylserine. This is (Lyso)-N-acylphosphatidylethanolamine lipase from Bos taurus (Bovine).